Consider the following 48-residue polypeptide: MVKKTIAAIFSVLVLSSVLTACNTTRGVGQDISEGGSAISGAGTKAQQ.

An N-terminal signal peptide occupies residues 1–21 (MVKKTIAAIFSVLVLSSVLTA). Residue C22 is the site of N-palmitoyl cysteine attachment. Residue C22 is the site of S-diacylglycerol cysteine attachment.

This sequence belongs to the EcnA/EcnB lipoprotein family.

The protein localises to the cell membrane. In terms of biological role, plays a role in the bacteriolysis. Is activated under conditions of high osmolarity by the factor sigma S. Entericidin A functions as an antidote. The protein is Entericidin B (ecnB) of Citrobacter freundii.